The chain runs to 88 residues: U1-hexatoxin-Iw1c (88 aa).

Positions 1-17 (LKFVVLICLVIMASTSA) are cleaved as a signal peptide. At glutamine 18 the chain carries Pyrrolidone carboxylic acid. Cystine bridges form between cysteine 20/cysteine 31, cysteine 25/cysteine 39, cysteine 30/cysteine 65, cysteine 49/cysteine 73, and cysteine 67/cysteine 80. Positions 86–88 (RSE) are excised as a propeptide.

It belongs to the MIT-like AcTx family. As to expression, expressed by the venom gland.

The protein resides in the secreted. The chain is U1-hexatoxin-Iw1c from Illawarra wisharti (Illawarra funnel-web spider).